The following is a 377-amino-acid chain: MSNGIVIIGSGFAARQLVKNIRKQDASIPLTLIAADSMDEYNKPDLSHVISQGQRADDLTRQTAGEFAEQFNLLLFPQTWVTDIDAEARVVKSQNNQWQYDKLVLATGASAFVPPVPGRELMLTLNSQQEYRACETQLRDARRVLIVGGGLIGSELAMDFCRAGKMVTLIDNAASILASLMPPEVSSRLQHRLTEMGVHLLLKSQLQGLEKTDSGILATLDHQRSIEVDAVIAATGLRPETALARRAGLTINRGVCVDSYLQTSNADIYALGDCAEINGQVLPFLQPIQLSAMVLAKNLLGNNTPLKLPAMLVKIKTPELPLHLAGETQRQDLRWQINTERQGMVARGVDDADQLRAFVVSEDRMKEAFGLLKTLPV.

It belongs to the FAD-dependent oxidoreductase family. Requires FAD as cofactor.

The protein resides in the cytoplasm. It catalyses the reaction 2 reduced [nitric oxide reductase rubredoxin domain] + NAD(+) + H(+) = 2 oxidized [nitric oxide reductase rubredoxin domain] + NADH. It participates in nitrogen metabolism; nitric oxide reduction. Its function is as follows. One of at least two accessory proteins for anaerobic nitric oxide (NO) reductase. Reduces the rubredoxin moiety of NO reductase. This Escherichia coli O157:H7 protein is Nitric oxide reductase FlRd-NAD(+) reductase.